We begin with the raw amino-acid sequence, 216 residues long: Cytidylate kinase (216 aa).

Gly-7 to Thr-15 contacts ATP.

The protein belongs to the cytidylate kinase family. Type 1 subfamily.

The protein resides in the cytoplasm. The catalysed reaction is CMP + ATP = CDP + ADP. The enzyme catalyses dCMP + ATP = dCDP + ADP. This Chlamydia trachomatis serovar D (strain ATCC VR-885 / DSM 19411 / UW-3/Cx) protein is Cytidylate kinase.